The chain runs to 520 residues: Arabinose import ATP-binding protein AraG (520 aa).

A compositionally biased stretch (polar residues) spans methionine 1–serine 10. A disordered region spans residues methionine 1–glycine 27. 2 ABC transporter domains span residues leucine 30 to arginine 265 and arginine 265 to leucine 516. Glycine 62–serine 69 lines the ATP pocket.

This sequence belongs to the ABC transporter superfamily. Arabinose importer (TC 3.A.1.2.2) family. As to quaternary structure, the complex is composed of two ATP-binding proteins (AraG), two transmembrane proteins (AraH) and a solute-binding protein (AraF).

The protein resides in the cell inner membrane. It carries out the reaction L-arabinose(out) + ATP + H2O = L-arabinose(in) + ADP + phosphate + H(+). In terms of biological role, part of the ABC transporter complex AraFGH involved in L-arabinose import. Responsible for energy coupling to the transport system. This chain is Arabinose import ATP-binding protein AraG, found in Azospirillum brasilense.